Here is a 118-residue protein sequence, read N- to C-terminus: Small ribosomal subunit protein uS13 (118 aa).

Residues 94 to 118 (GLPVRGQRTKTNARTRKGPRKPIKK) are disordered.

It belongs to the universal ribosomal protein uS13 family. In terms of assembly, part of the 30S ribosomal subunit. Forms a loose heterodimer with protein S19. Forms two bridges to the 50S subunit in the 70S ribosome.

Its function is as follows. Located at the top of the head of the 30S subunit, it contacts several helices of the 16S rRNA. In the 70S ribosome it contacts the 23S rRNA (bridge B1a) and protein L5 of the 50S subunit (bridge B1b), connecting the 2 subunits; these bridges are implicated in subunit movement. Contacts the tRNAs in the A and P-sites. In Erwinia tasmaniensis (strain DSM 17950 / CFBP 7177 / CIP 109463 / NCPPB 4357 / Et1/99), this protein is Small ribosomal subunit protein uS13.